The chain runs to 393 residues: Chorismate synthase (393 aa).

Positions 48 and 54 each coordinate NADP(+). FMN-binding positions include 125-127, 238-239, glycine 278, 293-297, and arginine 319; these read RSS, NA, and KPTSS. Positions 355–393 are disordered; that stretch reads ACTTPKIPGHTGPREGQEEGPSDSEPKVEFADDPEPDEA.

The protein belongs to the chorismate synthase family. In terms of assembly, homotetramer. The cofactor is FMNH2.

It catalyses the reaction 5-O-(1-carboxyvinyl)-3-phosphoshikimate = chorismate + phosphate. The protein operates within metabolic intermediate biosynthesis; chorismate biosynthesis; chorismate from D-erythrose 4-phosphate and phosphoenolpyruvate: step 7/7. In terms of biological role, catalyzes the anti-1,4-elimination of the C-3 phosphate and the C-6 proR hydrogen from 5-enolpyruvylshikimate-3-phosphate (EPSP) to yield chorismate, which is the branch point compound that serves as the starting substrate for the three terminal pathways of aromatic amino acid biosynthesis. This reaction introduces a second double bond into the aromatic ring system. This Nitrosospira multiformis (strain ATCC 25196 / NCIMB 11849 / C 71) protein is Chorismate synthase.